The primary structure comprises 103 residues: Small ribosomal subunit protein uS10 (103 aa).

The protein belongs to the universal ribosomal protein uS10 family. In terms of assembly, part of the 30S ribosomal subunit.

Involved in the binding of tRNA to the ribosomes. The chain is Small ribosomal subunit protein uS10 from Chlorobaculum parvum (strain DSM 263 / NCIMB 8327) (Chlorobium vibrioforme subsp. thiosulfatophilum).